The sequence spans 1254 residues: SUN domain-containing ossification factor (1254 aa).

Residues 1 to 29 form the signal peptide; sequence MKKHRRALALVSCLFLCSLVWLPSWRVCC. Disordered regions lie at residues 58–88, 118–270, and 282–304; these read KKDE…HKLK, EESS…DIPT, and EKEK…KKVQ. The span at 130-145 shows a compositional bias: low complexity; the sequence is VENISSSSTSEITPIS. Positions 165 to 175 are enriched in acidic residues; that stretch reads EQSETDCDVGE. N-linked (GlcNAc...) asparagine glycans are attached at residues N202 and N236. Basic and acidic residues predominate over residues 241–253; sequence LKNESSDYTKPGD. The region spanning 284-453 is the SUN domain; the sequence is EKSQSMHASS…SLIRVFGTSM (170 aa). Polar residues predominate over residues 288–297; that stretch reads SMHASSNGGS. N-linked (GlcNAc...) asparagine glycosylation occurs at N524. Disordered stretches follow at residues 530-553, 583-605, and 759-788; these read NATA…PSPE, EEEE…EDES, and HIPS…SSIE. The segment covering 540–553 has biased composition (low complexity); sequence PESTPVSTPVPSPE. Residues 909-1009 are a coiled coil; sequence NQKESVFMRL…VAELKREVSD (101 aa). 2 N-linked (GlcNAc...) asparagine glycosylation sites follow: N928 and N955. The chain crosses the membrane as a helical span at residues 1011 to 1031; it reads QSYLVISLVLCVVLGLMLCMQ. Phosphoserine is present on S1081. Residues 1152-1172 are disordered; sequence EVYHSSYKGPPSEGSSETSSQ. Over residues 1163–1172 the composition is skewed to low complexity; sequence SEGSSETSSQ.

Post-translationally, O-glycosylated. O-mannosylated by POMT1 and POMT2 and elongated by POMGNT1. N-glycosylated. As to expression, highly expressed in pancreas and testis and to a lower extent in prostate, ovary, heart, thymus, small intestine and spleen.

It is found in the rough endoplasmic reticulum membrane. Its function is as follows. Required for bone modeling during late embryogenesis. Regulates type I collagen synthesis in osteoblasts during their postnatal maturation. The polypeptide is SUN domain-containing ossification factor (SUCO) (Homo sapiens (Human)).